Reading from the N-terminus, the 559-residue chain is YTH domain-containing family protein 1 (559 aa).

A disordered region spans residues 1-49 (MSATSVDPQRTKGQDNKVQNGSLHQKDAVHDNDFEPYLSGQSNPSNSYP). Ser2 carries the post-translational modification N-acetylserine. Residues 24–33 (HQKDAVHDND) are compositionally biased toward basic and acidic residues. Ser182 bears the Phosphoserine mark. The tract at residues 239–365 (SKPAKPQPKM…PTSAPSVESH (127 aa)) is disordered. Composition is skewed to low complexity over residues 279-305 (PAPK…AQPL) and 314-326 (QPQY…PLQP). Residues 343-361 (GANSDSNSVGNAQPTSAPS) show a composition bias toward polar residues. The YTH domain maps to 389-523 (GRVFIIKSYS…EKAKQVLKII (135 aa)). Residues 395-397 (KSY), Asp401, 411-412 (WC), Asn441, Trp465, and Trp470 contribute to the RNA site.

Belongs to the YTHDF family. YTHDF1 subfamily. As to quaternary structure, interacts with CNOT1; promoting recruitment of the CCR4-NOT complex. Interacts with ribosomes. Interacts with eIF3 (EIF3A or EIF3B). Interacts with YTHDF3. Post-translationally, ubiquitinated by the CUL7-FBXW8 E3 ligase complex leading to degradation. Deubiquitinated and stabilized by USP5 by removing 'Lys-11'-linked polyubiquitination. As to expression, in brain, preferentially expressed in the hippocampus.

The protein localises to the cytoplasm. It is found in the P-body. It localises to the stress granule. Functionally, specifically recognizes and binds N6-methyladenosine (m6A)-containing mRNAs, and regulates their stability. M6A is a modification present at internal sites of mRNAs and some non-coding RNAs and plays a role in mRNA stability and processing. Acts as a regulator of mRNA stability by promoting degradation of m6A-containing mRNAs via interaction with the CCR4-NOT complex. The YTHDF paralogs (YTHDF1, YTHDF2 and YTHDF3) share m6A-containing mRNAs targets and act redundantly to mediate mRNA degradation and cellular differentiation. Required to facilitate learning and memory formation in the hippocampus by binding to m6A-containing neuronal mRNAs. Acts as a regulator of axon guidance by binding to m6A-containing ROBO3 transcripts. Acts as a negative regulator of antigen cross-presentation in myeloid dendritic cells. In the context of tumorigenesis, negative regulation of antigen cross-presentation limits the anti-tumor response by reducing efficiency of tumor-antigen cross-presentation. Promotes formation of phase-separated membraneless compartments, such as P-bodies or stress granules, by undergoing liquid-liquid phase separation upon binding to mRNAs containing multiple m6A-modified residues: polymethylated mRNAs act as a multivalent scaffold for the binding of YTHDF proteins, juxtaposing their disordered regions and thereby leading to phase separation. The resulting mRNA-YTHDF complexes then partition into different endogenous phase-separated membraneless compartments, such as P-bodies, stress granules or neuronal RNA granules. The polypeptide is YTH domain-containing family protein 1 (Mus musculus (Mouse)).